Here is a 57-residue protein sequence, read N- to C-terminus: UPF0391 membrane protein XC_2938 (57 aa).

2 consecutive transmembrane segments (helical) span residues Trp4–Ala24 and Phe33–Ala53.

It belongs to the UPF0391 family.

It is found in the cell membrane. In Xanthomonas campestris pv. campestris (strain 8004), this protein is UPF0391 membrane protein XC_2938.